The following is a 119-amino-acid chain: Large ribosomal subunit protein bL19 (119 aa).

It belongs to the bacterial ribosomal protein bL19 family.

In terms of biological role, this protein is located at the 30S-50S ribosomal subunit interface and may play a role in the structure and function of the aminoacyl-tRNA binding site. This is Large ribosomal subunit protein bL19 (rplS) from Mycoplasma pneumoniae (strain ATCC 29342 / M129 / Subtype 1) (Mycoplasmoides pneumoniae).